Reading from the N-terminus, the 676-residue chain is Translation initiation factor IF-2, mitochondrial (676 aa).

The tr-type G domain maps to 143 to 326 (KRAPVVTIMG…MDIRAENSPK (184 aa)). The interval 152-159 (GHVDHGKT) is G1. Residue 152–159 (GHVDHGKT) coordinates GTP. The segment at 177-181 (GITQH) is G2. Residues 200-203 (DTPG) and 254-257 (TKID) each bind GTP. Residues 200–203 (DTPG) are G3. A G4 region spans residues 254–257 (TKID). The segment at 296–298 (SAK) is G5.

This sequence belongs to the TRAFAC class translation factor GTPase superfamily. Classic translation factor GTPase family. IF-2 subfamily.

The protein localises to the mitochondrion. In terms of biological role, one of the essential components for the initiation of protein synthesis. Protects formylmethionyl-tRNA from spontaneous hydrolysis and promotes its binding to the 30S ribosomal subunits. Also involved in the hydrolysis of GTP during the formation of the 70S ribosomal complex. This is Translation initiation factor IF-2, mitochondrial (IFM1) from Saccharomyces cerevisiae (strain ATCC 204508 / S288c) (Baker's yeast).